A 691-amino-acid chain; its full sequence is DNA topoisomerase 1 (691 aa).

Positions D3–T114 constitute a Toprim domain. Residues E9 and D82 each contribute to the Mg(2+) site. Residues N129 to V558 form the Topo IA-type catalytic domain. Residues S163–Q168 are interaction with DNA. Y298 acts as the O-(5'-phospho-DNA)-tyrosine intermediate in catalysis. C4-type zinc fingers lie at residues C579–C605, C619–C647, and C660–C683.

It belongs to the type IA topoisomerase family. In terms of assembly, monomer. Interacts with the RNA polymerase core. Mg(2+) is required as a cofactor.

The catalysed reaction is ATP-independent breakage of single-stranded DNA, followed by passage and rejoining.. Functionally, releases the supercoiling and torsional tension of DNA, which is introduced during the DNA replication and transcription, by transiently cleaving and rejoining one strand of the DNA duplex. Introduces a single-strand break via transesterification at a target site in duplex DNA. The scissile phosphodiester is attacked by the catalytic tyrosine of the enzyme, resulting in the formation of a DNA-(5'-phosphotyrosyl)-enzyme intermediate and the expulsion of a 3'-OH DNA strand. The free DNA strand then undergoes passage around the unbroken strand, thus removing DNA supercoils. Finally, in the religation step, the DNA 3'-OH attacks the covalent intermediate to expel the active-site tyrosine and restore the DNA phosphodiester backbone. This is DNA topoisomerase 1 from Bacillus subtilis (strain 168).